Reading from the N-terminus, the 243-residue chain is DNA repair protein RecO (243 aa).

Belongs to the RecO family.

Functionally, involved in DNA repair and RecF pathway recombination. The chain is DNA repair protein RecO from Serratia proteamaculans (strain 568).